Here is a 429-residue protein sequence, read N- to C-terminus: Probable M18 family aminopeptidase 2 (429 aa).

3 residues coordinate Zn(2+): H82, H156, and H401.

The protein belongs to the peptidase M18 family. Requires Zn(2+) as cofactor.

This is Probable M18 family aminopeptidase 2 from Pseudomonas aeruginosa (strain UCBPP-PA14).